Here is a 588-residue protein sequence, read N- to C-terminus: MRTNYCGLIDVQYLDQTVILYGWVHRRRDHGGVIFVDLRDREGLVQVVCDPDNPTAFQVAEKIRNEFVVRITGRVRHRPPGTVNPNLISGEIEVLVSSIDILNASLTPPFLMDDESLSEATRLEHRYLDLRRPQMQENLRLRYKVAMAVRLFLDQHGFIDVETPMLTKSTPEGARDYLVPSRVNTGHFFALPQSPQLFKQLLMVSGFDRYYQITKCFRDEDLRADRQPEFTQIDIETSFLNESQIMQMMERMICTVFKSVRNIDLPTPFPRLTHGEAMSKYGSDKPDMRVSLVLTELTDVMQEVEFKVFREAALRTGGRVAALRVPGGGALSRKEIDDYTGFVAIYGAKGLAYIKVNALEKGMDGLQSPILKFLPENVIQIVLERTGAKDGDLIFFGADKAQVVNEALGALRAKVGHDRGLAESGWKPLWVVDFPMFERDEEENRWKALHHPFTSPAEGHEDLLETDPEKALSKAYDMVLNGSEIGGGSVRIHRQEVQSKVFRALNIGADEANEKFGFLLEALQYGAPPHGGIAFGLDRIVAMMAGAESIREVIAFPKTQRAQCLLTHAPSTVGEKQLRELHIKLRHA.

Glu-172 lines the L-aspartate pocket. The tract at residues 196–199 (QLFK) is aspartate. Position 218 (Arg-218) interacts with L-aspartate. Residues 218–220 (RDE) and Gln-227 each bind ATP. His-450 provides a ligand contact to L-aspartate. ATP is bound at residue Glu-484. L-aspartate is bound at residue Arg-491. 536–539 (GLDR) is a binding site for ATP.

It belongs to the class-II aminoacyl-tRNA synthetase family. Type 1 subfamily. As to quaternary structure, homodimer.

It is found in the cytoplasm. The catalysed reaction is tRNA(Asx) + L-aspartate + ATP = L-aspartyl-tRNA(Asx) + AMP + diphosphate. Its function is as follows. Aspartyl-tRNA synthetase with relaxed tRNA specificity since it is able to aspartylate not only its cognate tRNA(Asp) but also tRNA(Asn). Reaction proceeds in two steps: L-aspartate is first activated by ATP to form Asp-AMP and then transferred to the acceptor end of tRNA(Asp/Asn). The sequence is that of Aspartate--tRNA(Asp/Asn) ligase from Nitrosospira multiformis (strain ATCC 25196 / NCIMB 11849 / C 71).